Consider the following 282-residue polypeptide: Homeobox protein CDX-4 (282 aa).

Disordered regions lie at residues 13-36 and 98-156; these read MYPGTLRSPGGSSTAGVGTSGGSG and MNDM…SPYA. Residues 20 to 29 show a composition bias toward low complexity; it reads SPGGSSTAGV. 2 stretches are compositionally biased toward polar residues: residues 110–124 and 133–148; these read DYSTLGPTSGASNGG and SLVSLDSGTSGATSPS. The segment at residues 171-230 is a DNA-binding region (homeobox); that stretch reads KEKYRVVYTDHQRLELEKEFHCNRYITIRRKSELAVNLGLSERQVKIWFQNRRAKERKMI.

The protein belongs to the Caudal homeobox family.

The protein localises to the nucleus. The chain is Homeobox protein CDX-4 (Cdx4) from Mus musculus (Mouse).